The chain runs to 402 residues: S-adenosylmethionine synthase (402 aa).

Residue histidine 16 coordinates ATP. Aspartate 18 lines the Mg(2+) pocket. Glutamate 44 is a K(+) binding site. 2 residues coordinate L-methionine: glutamate 57 and glutamine 103. The flexible loop stretch occupies residues 103-113; that stretch reads QSPDIAQGVDT. ATP is bound by residues 178 to 180, 249 to 250, aspartate 258, 264 to 265, alanine 281, and lysine 285; these read DGK, KF, and RK. Residue aspartate 258 coordinates L-methionine. Lysine 289 provides a ligand contact to L-methionine.

Belongs to the AdoMet synthase family. In terms of assembly, homotetramer; dimer of dimers. Requires Mg(2+) as cofactor. K(+) serves as cofactor.

It localises to the cytoplasm. The enzyme catalyses L-methionine + ATP + H2O = S-adenosyl-L-methionine + phosphate + diphosphate. It participates in amino-acid biosynthesis; S-adenosyl-L-methionine biosynthesis; S-adenosyl-L-methionine from L-methionine: step 1/1. Functionally, catalyzes the formation of S-adenosylmethionine (AdoMet) from methionine and ATP. The overall synthetic reaction is composed of two sequential steps, AdoMet formation and the subsequent tripolyphosphate hydrolysis which occurs prior to release of AdoMet from the enzyme. The chain is S-adenosylmethionine synthase from Mycobacterium sp. (strain JLS).